The chain runs to 337 residues: tRNA N6-adenosine threonylcarbamoyltransferase (337 aa).

Fe cation-binding residues include H111 and H115. Residues 134–138 (LVSGG), D167, G180, and N272 contribute to the substrate site. D300 serves as a coordination point for Fe cation.

Belongs to the KAE1 / TsaD family. It depends on Fe(2+) as a cofactor.

It is found in the cytoplasm. The catalysed reaction is L-threonylcarbamoyladenylate + adenosine(37) in tRNA = N(6)-L-threonylcarbamoyladenosine(37) in tRNA + AMP + H(+). Its function is as follows. Required for the formation of a threonylcarbamoyl group on adenosine at position 37 (t(6)A37) in tRNAs that read codons beginning with adenine. Is involved in the transfer of the threonylcarbamoyl moiety of threonylcarbamoyl-AMP (TC-AMP) to the N6 group of A37, together with TsaE and TsaB. TsaD likely plays a direct catalytic role in this reaction. The protein is tRNA N6-adenosine threonylcarbamoyltransferase of Escherichia coli (strain K12 / MC4100 / BW2952).